We begin with the raw amino-acid sequence, 438 residues long: GTPase Der (438 aa).

EngA-type G domains follow at residues 4-168 (PVVA…PAGA) and 176-351 (VRIA…GEYR). GTP-binding positions include 10–17 (GRPNVGKS), 57–61 (DTGGI), 120–123 (NKVD), 182–189 (GRPNVGKS), 229–233 (DTAGM), and 294–297 (NKWD). The KH-like domain occupies 352-436 (RQIPTSMLNR…PVRILFRRRE (85 aa)).

It belongs to the TRAFAC class TrmE-Era-EngA-EngB-Septin-like GTPase superfamily. EngA (Der) GTPase family. As to quaternary structure, associates with the 50S ribosomal subunit.

GTPase that plays an essential role in the late steps of ribosome biogenesis. The chain is GTPase Der from Desulforudis audaxviator (strain MP104C).